The chain runs to 437 residues: Probable N-acetylmuramidase (437 aa).

An N-terminal signal peptide occupies residues 1 to 57 (MPVSRVKVKNRHLKKKTKKPLAFYKPTTKFVGAVLIAGTLTTTHELLLQQTSPMVQA). 3 disordered regions span residues 217–244 (SSAG…SSTT), 291–319 (SSTN…ASQT), and 367–392 (ATSN…NSNA). The LysM 1 domain maps to 243-286 (TTYTVKSGDTLWGISQRYGISVAQIQSANNLKSTIIYIGQKLLL). Residues 291 to 317 (SSTNSGGSNNSASTTPTTSVTPAKPAS) show a composition bias toward low complexity. The LysM 2 domain maps to 319 to 362 (TSVKVKSGDTLWALSVKYKTSIAQLKSWNHLSSDTIYIGQNLIV). One can recognise a LysM 3 domain in the interval 393–436 (SIHKVVKGDTLWGLSQKSGSPIASIKAWNHLSSDTILIGQYLRI).

This sequence belongs to the glycosyl hydrolase 73 family.

It localises to the secreted. It carries out the reaction Hydrolysis of (1-&gt;4)-beta-linkages between N-acetylmuramic acid and N-acetyl-D-glucosamine residues in a peptidoglycan and between N-acetyl-D-glucosamine residues in chitodextrins.. Hydrolyzes the cell wall of L.lactis and M.lysodeikticus. Required for cell separation during growth. The polypeptide is Probable N-acetylmuramidase (acmA) (Lactococcus lactis subsp. cremoris (Streptococcus cremoris)).